A 210-amino-acid chain; its full sequence is A-kinase-interacting protein 1 (210 aa).

2 disordered regions span residues 58 to 80 (HLEK…ERPP) and 136 to 162 (QRKD…EASQ).

Interacts with PRKACA and RELA. In terms of tissue distribution, expressed at high levels in adult heart and at lower levels in brain, testis, ovary and skeletal muscle. Up-regulated in some breast cancer cell lines. Isoform 1 and isoform 3 are expressed in fetal brain.

The protein resides in the nucleus. Its function is as follows. Enhances NF-kappa-B transcriptional activity by regulating the nuclear localization of the NF-kappa-B subunit RELA and promoting the phosphorylation of RELA by PRKACA. Regulates the effect of the cAMP-dependent protein kinase signaling pathway on the NF-kappa-B activation cascade. The protein is A-kinase-interacting protein 1 (AKIP1) of Homo sapiens (Human).